The following is a 373-amino-acid chain: Glutamine synthetase (373 aa).

Residues 24–106 (EKVQAMYIWI…VLCEVFKYNR (83 aa)) enclose the GS beta-grasp domain. The GS catalytic domain maps to 113 to 373 (LRHTCRRIMD…TGDEPFEYKN (261 aa)). Residue Glu134 coordinates ATP. Mn(2+)-binding residues include Glu134, Glu136, Glu196, and Glu203. 203 to 208 (EFQVGP) contacts ATP. L-glutamate is bound at residue 246 to 247 (NW). Residue His253 participates in Mn(2+) binding. Residues 255–257 (NFS), Arg319, and Arg324 each bind ATP. Residue Arg319 coordinates L-glutamate. 336–338 (YFE) serves as a coordination point for ADP. Glu338 serves as a coordination point for Mn(2+). An L-glutamate-binding site is contributed by Arg340.

It belongs to the glutamine synthetase family. Homooctamer and homotetramer. Biotin serves as cofactor. It depends on Mg(2+) as a cofactor. The cofactor is Mn(2+). In terms of tissue distribution, expressed in retina, brain and liver. Little or no detectable expression in breast muscle, pancreas and spleen.

Its subcellular location is the cytoplasm. The protein resides in the mitochondrion. It carries out the reaction L-glutamate + NH4(+) + ATP = L-glutamine + ADP + phosphate + H(+). The enzyme catalyses L-glutamate + H(+) = 4-aminobutanoate + CO2. Its activity is regulated as follows. Glutamate to glutamine ratio influences catalytic activity. At glutamate to glutamine ratios greater than 4, decarboxylase activity ceases. In the presence of manganese, synthetase activity is limited to concentrations between 10 mM and 20 mM, whereas decarboxylase activity is not affected. Both catalytic activities are inhibited by avidin. Its function is as follows. Glutamine synthetase that catalyzes the ATP-dependent conversion of glutamate and ammonia to glutamine. When expressed in liver, it may be involved in detoxifying intramitochondrially generated ammonia. Also acts as glutamate decarboxylase by catalyzing the production of 4-aminobutanoate (gamma-aminobutyric acid, GABA) in a pyridoxal phosphate-independent manner. This Gallus gallus (Chicken) protein is Glutamine synthetase.